A 148-amino-acid chain; its full sequence is Deoxyuridine 5'-triphosphate nucleotidohydrolase (148 aa).

Residues 68 to 70 (RSG), asparagine 81, 85 to 87 (TID), and lysine 95 contribute to the substrate site.

It belongs to the dUTPase family. Mg(2+) is required as a cofactor.

The enzyme catalyses dUTP + H2O = dUMP + diphosphate + H(+). Its pathway is pyrimidine metabolism; dUMP biosynthesis; dUMP from dCTP (dUTP route): step 2/2. In terms of biological role, this enzyme is involved in nucleotide metabolism: it produces dUMP, the immediate precursor of thymidine nucleotides and it decreases the intracellular concentration of dUTP so that uracil cannot be incorporated into DNA. The sequence is that of Deoxyuridine 5'-triphosphate nucleotidohydrolase from Rickettsia rickettsii (strain Iowa).